The chain runs to 138 residues: ATP synthase epsilon chain (138 aa).

Belongs to the ATPase epsilon chain family. As to quaternary structure, F-type ATPases have 2 components, CF(1) - the catalytic core - and CF(0) - the membrane proton channel. CF(1) has five subunits: alpha(3), beta(3), gamma(1), delta(1), epsilon(1). CF(0) has three main subunits: a, b and c.

It localises to the cell membrane. In terms of biological role, produces ATP from ADP in the presence of a proton gradient across the membrane. The protein is ATP synthase epsilon chain of Polynucleobacter asymbioticus (strain DSM 18221 / CIP 109841 / QLW-P1DMWA-1) (Polynucleobacter necessarius subsp. asymbioticus).